The following is a 90-amino-acid chain: Small ribosomal subunit protein bS18 (90 aa).

Belongs to the bacterial ribosomal protein bS18 family. In terms of assembly, part of the 30S ribosomal subunit. Forms a tight heterodimer with protein bS6.

In terms of biological role, binds as a heterodimer with protein bS6 to the central domain of the 16S rRNA, where it helps stabilize the platform of the 30S subunit. The sequence is that of Small ribosomal subunit protein bS18 from Bordetella avium (strain 197N).